The primary structure comprises 1214 residues: RNA-directed RNA polymerase VP1 (1214 aa).

Positions 610–805 (APHDVMAPQL…KRTIVGNNVA (196 aa)) constitute a RdRp catalytic domain.

This sequence belongs to the reoviridae RNA-directed RNA polymerase family.

The protein localises to the virion. The enzyme catalyses RNA(n) + a ribonucleoside 5'-triphosphate = RNA(n+1) + diphosphate. In terms of biological role, RNA-directed RNA polymerase that is involved in transcription and genome replication. Following infection, it catalyzes the synthesis of fully conservative plus strands. After core assembly, which consists in recruitment of one capped plus-strand for each genomic segments and polymerase complexes, the polymerase switches mode and catalyzes the synthesis of complementary minus-strands. The protein is RNA-directed RNA polymerase VP1 (Segment-1) of Banna virus (BAV).